A 429-amino-acid chain; its full sequence is Glucose-1-phosphate adenylyltransferase (429 aa).

Residues Tyr116, Gly181, 196–197 (EK), and Ser214 each bind alpha-D-glucose 1-phosphate.

It belongs to the bacterial/plant glucose-1-phosphate adenylyltransferase family. In terms of assembly, homotetramer.

The enzyme catalyses alpha-D-glucose 1-phosphate + ATP + H(+) = ADP-alpha-D-glucose + diphosphate. It participates in glycan biosynthesis; glycogen biosynthesis. Involved in the biosynthesis of ADP-glucose, a building block required for the elongation reactions to produce glycogen. Catalyzes the reaction between ATP and alpha-D-glucose 1-phosphate (G1P) to produce pyrophosphate and ADP-Glc. The chain is Glucose-1-phosphate adenylyltransferase from Paramagnetospirillum magneticum (strain ATCC 700264 / AMB-1) (Magnetospirillum magneticum).